The chain runs to 630 residues: tRNA uridine 5-carboxymethylaminomethyl modification enzyme MnmG (630 aa).

G13–G18 serves as a coordination point for FAD. Residue G273–F287 coordinates NAD(+).

The protein belongs to the MnmG family. As to quaternary structure, homodimer. Heterotetramer of two MnmE and two MnmG subunits. FAD is required as a cofactor.

The protein resides in the cytoplasm. Its function is as follows. NAD-binding protein involved in the addition of a carboxymethylaminomethyl (cmnm) group at the wobble position (U34) of certain tRNAs, forming tRNA-cmnm(5)s(2)U34. This is tRNA uridine 5-carboxymethylaminomethyl modification enzyme MnmG from Pseudomonas entomophila (strain L48).